The primary structure comprises 644 residues: 2-isopropylmalate synthase (644 aa).

Positions Met-1–Ser-40 are disordered. Over residues Pro-31 to Ser-40 the composition is skewed to polar residues. The Pyruvate carboxyltransferase domain maps to Pro-72–Asp-346. 4 residues coordinate Mg(2+): Asp-81, His-285, His-287, and Asn-321. The tract at residues Pro-491–Arg-644 is regulatory domain. The VNTR1 repeat unit spans residues Val-575 to Pro-593. The disordered stretch occupies residues Ala-581–Pro-612. Residues Val-594–Pro-612 form a VNTR2 repeat.

This sequence belongs to the alpha-IPM synthase/homocitrate synthase family. LeuA type 2 subfamily. In terms of assembly, homodimer. Mg(2+) serves as cofactor.

Its subcellular location is the cytoplasm. The enzyme catalyses 3-methyl-2-oxobutanoate + acetyl-CoA + H2O = (2S)-2-isopropylmalate + CoA + H(+). The protein operates within amino-acid biosynthesis; L-leucine biosynthesis; L-leucine from 3-methyl-2-oxobutanoate: step 1/4. Its function is as follows. Catalyzes the condensation of the acetyl group of acetyl-CoA with 3-methyl-2-oxobutanoate (2-ketoisovalerate) to form 3-carboxy-3-hydroxy-4-methylpentanoate (2-isopropylmalate). This Mycobacterium tuberculosis (strain CDC 1551 / Oshkosh) protein is 2-isopropylmalate synthase.